We begin with the raw amino-acid sequence, 1199 residues long: Tubulin-specific chaperone D (1199 aa).

2 disordered regions span residues 1 to 23 and 337 to 361; these read MALSEEPAAGAAEDPVEDPVEDA and QHSIQNPREPVTQAETPDSDGQDDV. A compositionally biased stretch (acidic residues) spans 14–23; it reads DPVEDPVEDA. HEAT repeat units follow at residues 368–406, 603–639, 757–793, and 1111–1147; these read VIEQLLVGLKDKDTIVRWSAAKGIGRMAGRLPKELADDV, EHTAREVFPRLLSMTQSPDLHTRHGAVLACAEVARSL, AAAQEELVKLYLAELQSPEEMTRCGCALALGALPAFF, and GDVRRKVLLQLFLLLCHPFPVIRKNTASQVYEMVLTY.

This sequence belongs to the TBCD family. In terms of assembly, found in a complex with at least ARL2, PPP2CB, PPP2R1A, PPP2R2A, PPP2R5E and TBCD. Interacts with PPP2CB. Part of a supercomplex made of cofactors A to E. Cofactors A and D function by capturing and stabilizing tubulin in a quasi-native conformation. Cofactor E binds to the cofactor D-tubulin complex; interaction with cofactor C then causes the release of tubulin polypeptides that are committed to the native state. Interacts with ARL2; interaction is enhanced with the GDP-bound form of ARL2. Does not interact with ARL3, ARL4A and ARL4D. Interacts with beta tubulin. Interacts with TBCE.

It is found in the cell junction. It localises to the tight junction. The protein resides in the lateral cell membrane. Its subcellular location is the cytoplasm. The protein localises to the adherens junction. It is found in the cytoskeleton. It localises to the microtubule organizing center. The protein resides in the centrosome. In terms of biological role, tubulin-folding protein implicated in the first step of the tubulin folding pathway and required for tubulin complex assembly. Involved in the regulation of microtubule polymerization or depolymerization, it modulates microtubule dynamics by capturing GTP-bound beta-tubulin (TUBB). Its ability to interact with beta tubulin is regulated via its interaction with ARL2. Acts as a GTPase-activating protein (GAP) for ARL2. Induces microtubule disruption in absence of ARL2. Increases degradation of beta tubulin, when overexpressed in polarized cells. Promotes epithelial cell detachment, a process antagonized by ARL2. Induces tight adherens and tight junctions disassembly at the lateral cell membrane. Required for correct assembly and maintenance of the mitotic spindle, and proper progression of mitosis. Involved in neuron morphogenesis. This Bos taurus (Bovine) protein is Tubulin-specific chaperone D (TBCD).